A 239-amino-acid polypeptide reads, in one-letter code: Tetraspanin-9 (239 aa).

3 helical membrane-spanning segments follow: residues 14 to 34 (FLFN…GIWL), 56 to 76 (LVIA…LGAI), and 86 to 106 (FFIV…LFFV). Residues Asn180 and Asn181 are each glycosylated (N-linked (GlcNAc...) asparagine). The chain crosses the membrane as a helical span at residues 204-224 (VLGTVGMCLLITQILGMAFSM).

It belongs to the tetraspanin (TM4SF) family. In terms of assembly, found in a complex with GP6. Glycosylated.

The protein resides in the membrane. The chain is Tetraspanin-9 (TSPAN9) from Ovis aries (Sheep).